A 239-amino-acid polypeptide reads, in one-letter code: TPR repeat-containing protein TP_0282 (239 aa).

A helical transmembrane segment spans residues 21–43 (LLVGVLVAILGGLGLSAGCLLVM). TPR repeat units follow at residues 112–145 (AYAQACVADIFFARKEWEKAQQAYVRAAYGARRS) and 149–182 (GVYYFNAASCADERGRFEEARELYQRSARVQDFP).

The protein localises to the cell membrane. The chain is TPR repeat-containing protein TP_0282 from Treponema pallidum (strain Nichols).